The sequence spans 422 residues: MNEDRKNRESGKLLYCSFCGKSQHEVRKLIAGPAVFVCDECVELCNDIIREDLQGSEAGGVEGLPKPKEMKAILDQYVIGQDKAKRILSVAVYNHYKRLKARTFRNDVELAKSNVLLIGPTGSGKTLLAETLARVLDVPFTIADATTLTEAGYVGEDVENIIQKLLLACDYDVEKAEQGIVYIDEIDKISRKADSPSITRDVSGEGVQQALLKLMEGTVASVPPQGGRKHPQQEFLQVNTANILFICGGAFAGLDKTIRSRSERSGIGFSAEVKSKEENTNVGEILAGVEAEDLIRYGLIPEFIGRLPVVATLEELDEAALVRILIEPKNALVKQYARLFEMEGCELEILPEALGAIARRAMERKTGARGLRTIIEHALLDTMYELPSAEDVGKVVVDAKVIRGETEPHRVYRSVERQRVSA.

The 54-residue stretch at 4 to 57 (DRKNRESGKLLYCSFCGKSQHEVRKLIAGPAVFVCDECVELCNDIIREDLQGSE) folds into the ClpX-type ZB domain. Zn(2+) is bound by residues Cys16, Cys19, Cys38, and Cys41. 120–127 (PTGSGKTL) lines the ATP pocket.

It belongs to the ClpX chaperone family. In terms of assembly, component of the ClpX-ClpP complex. Forms a hexameric ring that, in the presence of ATP, binds to fourteen ClpP subunits assembled into a disk-like structure with a central cavity, resembling the structure of eukaryotic proteasomes.

Its function is as follows. ATP-dependent specificity component of the Clp protease. It directs the protease to specific substrates. Can perform chaperone functions in the absence of ClpP. This Methylococcus capsulatus (strain ATCC 33009 / NCIMB 11132 / Bath) protein is ATP-dependent Clp protease ATP-binding subunit ClpX 1.